The following is a 363-amino-acid chain: uncharacterized protein (363 aa).

This is an uncharacterized protein from Saccharomyces cerevisiae (strain ATCC 204508 / S288c) (Baker's yeast).